The sequence spans 354 residues: DNA polymerase IV (354 aa).

In terms of domain architecture, UmuC spans 14–198; the sequence is IIHIDMDAFF…MDIAKFHGVG (185 aa). Positions 18 and 116 each coordinate Mg(2+). The active site involves E117.

It belongs to the DNA polymerase type-Y family. Monomer. Mg(2+) is required as a cofactor.

Its subcellular location is the cytoplasm. It carries out the reaction DNA(n) + a 2'-deoxyribonucleoside 5'-triphosphate = DNA(n+1) + diphosphate. Poorly processive, error-prone DNA polymerase involved in untargeted mutagenesis. Copies undamaged DNA at stalled replication forks, which arise in vivo from mismatched or misaligned primer ends. These misaligned primers can be extended by PolIV. Exhibits no 3'-5' exonuclease (proofreading) activity. May be involved in translesional synthesis, in conjunction with the beta clamp from PolIII. This is DNA polymerase IV from Streptococcus sanguinis (strain SK36).